The sequence spans 117 residues: Large ribosomal subunit protein uL18 (117 aa).

This sequence belongs to the universal ribosomal protein uL18 family. In terms of assembly, part of the 50S ribosomal subunit; part of the 5S rRNA/L5/L18/L25 subcomplex. Contacts the 5S and 23S rRNAs.

This is one of the proteins that bind and probably mediate the attachment of the 5S RNA into the large ribosomal subunit, where it forms part of the central protuberance. This chain is Large ribosomal subunit protein uL18, found in Pseudoalteromonas atlantica (strain T6c / ATCC BAA-1087).